The following is a 275-amino-acid chain: Large ribosomal subunit protein uL2 (275 aa).

Positions 223–275 (VAMNPVDHPHGGGEGRTGEGRVPVSPWGTPAKGYRTRNNKRTDNMIVRRRHSK) are disordered. Over residues 229–241 (DHPHGGGEGRTGE) the composition is skewed to basic and acidic residues.

This sequence belongs to the universal ribosomal protein uL2 family. In terms of assembly, part of the 50S ribosomal subunit. Forms a bridge to the 30S subunit in the 70S ribosome.

In terms of biological role, one of the primary rRNA binding proteins. Required for association of the 30S and 50S subunits to form the 70S ribosome, for tRNA binding and peptide bond formation. It has been suggested to have peptidyltransferase activity; this is somewhat controversial. Makes several contacts with the 16S rRNA in the 70S ribosome. The polypeptide is Large ribosomal subunit protein uL2 (Laribacter hongkongensis (strain HLHK9)).